We begin with the raw amino-acid sequence, 337 residues long: Protein RecA (337 aa).

Position 66–73 (66–73 (GPESSGKT)) interacts with ATP.

Belongs to the RecA family.

The protein resides in the cytoplasm. Functionally, can catalyze the hydrolysis of ATP in the presence of single-stranded DNA, the ATP-dependent uptake of single-stranded DNA by duplex DNA, and the ATP-dependent hybridization of homologous single-stranded DNAs. It interacts with LexA causing its activation and leading to its autocatalytic cleavage. The chain is Protein RecA from Mesomycoplasma hyopneumoniae (strain J / ATCC 25934 / NCTC 10110) (Mycoplasma hyopneumoniae).